We begin with the raw amino-acid sequence, 389 residues long: Chitin-binding protein CbpD (389 aa).

Residues 1–25 (MKHYSATLALLPLTLALFLPQAAHA) form the signal peptide. Residues 26-208 (HGSMETPPSR…EAFYACIDVS (183 aa)) enclose the Chitin-binding type-4 domain.

Post-translationally, can be detected in the extracellular supernatant as a 43 kDa protein and a 23 kDa protein, both proteins have the same N-terminus. Only the larger protein binds chitin, which may protect it from further processing and/or degradation by elastase (lasB). It is not clear whether the short form is functional or a degradation product.

It is found in the secreted. Its function is as follows. Binds chitin but does not hydrolyze it, has no detectable protease or staphylolytic activity. This chain is Chitin-binding protein CbpD, found in Pseudomonas aeruginosa (strain ATCC 15692 / DSM 22644 / CIP 104116 / JCM 14847 / LMG 12228 / 1C / PRS 101 / PAO1).